The chain runs to 357 residues: DNA integrity scanning protein DisA (357 aa).

A DAC domain is found at 8 to 146 (VKSMINILQL…GNLRYTLKDI (139 aa)). Residues Gly75, Leu93, and 106–110 (MRHRT) each bind ATP.

Belongs to the DisA family. In terms of assembly, homooctamer. Mg(2+) is required as a cofactor.

It carries out the reaction 2 ATP = 3',3'-c-di-AMP + 2 diphosphate. Participates in a DNA-damage check-point that is active prior to asymmetric division when DNA is damaged. DisA forms globular foci that rapidly scan along the chromosomes during sporulation, searching for lesions. When a lesion is present, DisA pauses at the lesion site. This triggers a cellular response that culminates in a temporary block in sporulation initiation. Functionally, also has diadenylate cyclase activity, catalyzing the condensation of 2 ATP molecules into cyclic di-AMP (c-di-AMP). c-di-AMP acts as a signaling molecule that couples DNA integrity with progression of sporulation. The rise in c-di-AMP level generated by DisA while scanning the chromosome, operates as a positive signal that advances sporulation; upon encountering a lesion, the DisA focus arrests at the damaged site and halts c-di-AMP synthesis. This Bacillus mycoides (strain KBAB4) (Bacillus weihenstephanensis) protein is DNA integrity scanning protein DisA.